A 141-amino-acid chain; its full sequence is Hemoglobin subunit alpha-1 (141 aa).

Residues 1 to 141 enclose the Globin domain; the sequence is VLTDAEKKEV…VATVLTSKYR (141 aa). H58 serves as a coordination point for O2. A heme b-binding site is contributed by H87.

It belongs to the globin family. In terms of assembly, heterotetramer of two alpha chains and two beta chains. Red blood cells.

Functionally, involved in oxygen transport from the lung to the various peripheral tissues. The polypeptide is Hemoglobin subunit alpha-1 (Tachyglossus aculeatus aculeatus (Southeast Australian short-beaked echidna)).